Here is a 164-residue protein sequence, read N- to C-terminus: HTH-type transcriptional regulator IscR (164 aa).

The HTH rrf2-type domain occupies 2 to 131 (RLTSKGRYAV…NNITLGELVN (130 aa)). Positions 28 to 51 (LADISERQGISLSYLEQLFSRLRK) form a DNA-binding region, H-T-H motif. 3 residues coordinate [2Fe-2S] cluster: Cys-92, Cys-98, and Cys-104.

[2Fe-2S] cluster is required as a cofactor.

Regulates the transcription of several operons and genes involved in the biogenesis of Fe-S clusters and Fe-S-containing proteins. The sequence is that of HTH-type transcriptional regulator IscR from Salmonella choleraesuis (strain SC-B67).